Here is an 862-residue protein sequence, read N- to C-terminus: Cadherin-related family member 5 (862 aa).

The N-terminal stretch at 1–28 (MGAPALLWPPLLLPLLTVLFGHLPGTLA) is a signal peptide. Over 29 to 671 (QAQVCSANQT…GQRFSTVDMA (643 aa)) the chain is Extracellular. 9 N-linked (GlcNAc...) asparagine glycosylation sites follow: Asn-36, Asn-45, Asn-135, Asn-173, Asn-201, Asn-311, Asn-408, Asn-438, and Asn-479. 4 Cadherin domains span residues 40-127 (FTMN…APEF), 128-240 (PFTI…TPWF), 252-357 (IQAQ…PLQF), and 358-462 (SQSL…PPST). The segment at 452 to 658 (IQVSEREPPS…TTGPISGVGE (207 aa)) is disordered. Low complexity predominate over residues 461 to 500 (STESPTPPEAGGTTGPSSNTTLETPSTSGTSQGPATTSSG). Residues 529-652 (LGISTSPQTA…GTSQPTTTGP (124 aa)) show a composition bias toward polar residues. 3 consecutive repeat copies span residues 545–575 (TQTP…SGSS), 576–606 (TQTP…SGSS), and 607–636 (TQTP…PSGS). Residues 545–648 (TQTPKPGTSQ…TPKPGTSQPT (104 aa)) are 4 X 31 AA approximate tandem repeats. One copy of the 4; truncated repeat lies at 637 to 648 (TQTPKPGTSQPT). A helical transmembrane segment spans residues 672-692 (VLGGVLGALLLLALIFLIILI). Residues 693–862 (HKHYRHRFTC…LGAVADNTYV (170 aa)) are Cytoplasmic-facing. The interval 693-862 (HKHYRHRFTC…LGAVADNTYV (170 aa)) is mediates interaction with USH1C and MYO7B and is required for proper localization to microvilli tips and function in microvilli organization. Disordered regions lie at residues 706–803 (KAKE…EGGY) and 821–862 (LNEP…NTYV). A phosphoserine mark is found at Ser-729, Ser-751, and Ser-755. Over residues 739-768 (GPEPVQPPLRPPSPMSSSPTPPSSMPPSPQ) the composition is skewed to pro residues. At Thr-758 the chain carries Phosphothreonine. Phosphoserine occurs at positions 766 and 783. The span at 791–801 (LTKERRPEGEG) shows a compositional bias: basic and acidic residues. Position 825 is a phosphothreonine (Thr-825). The segment covering 827–837 (DVDSASASGSE) has biased composition (low complexity). Phosphoserine occurs at positions 832, 834, and 836.

In terms of assembly, part of the IMAC/intermicrovillar adhesion complex/intermicrovillar tip-link complex composed of ANKS4B, MYO7B, USH1C, CDHR2 and CDHR5. Interacts (via cytoplasmic domain) with USH1C and MYO7B; required for proper localization of CDHR5 to microvilli tips and its function in brush border differentiation. N- and O-glycosylated. In terms of tissue distribution, expressed predominantly in kidney. Also detected in lung and small intestine.

The protein resides in the apical cell membrane. Its subcellular location is the cell projection. The protein localises to the microvillus membrane. Functionally, intermicrovillar adhesion molecule that forms, via its extracellular domain, calcium-dependent heterophilic complexes with CDHR2 on adjacent microvilli. Thereby, controls the packing of microvilli at the apical membrane of epithelial cells. Through its cytoplasmic domain, interacts with microvillus cytoplasmic proteins to form the intermicrovillar adhesion complex/IMAC. This complex plays a central role in microvilli and epithelial brush border differentiation. This chain is Cadherin-related family member 5, found in Rattus norvegicus (Rat).